The following is a 468-amino-acid chain: Na(+)/H(+) antiporter (468 aa).

Transmembrane regions (helical) follow at residues 12 to 32 (HLAL…SEVF), 36 to 56 (LLVG…PHAA), 81 to 96 (DVRV…GAYF), 103 to 123 (IIVM…GFAY), 133 to 153 (GSLL…ALIV), 169 to 189 (LLIA…YFAI), 204 to 224 (WVLL…CVIG), and 258 to 278 (GIGT…GILF). Asn-287 is a glycosylation site (N-linked (GlcNAc...) asparagine). A helical membrane pass occupies residues 293-313 (VPAFIDQTFSLLFFTYYGTII). Asn-319 carries an N-linked (GlcNAc...) asparagine glycan. Helical transmembrane passes span 320–340 (WSVE…TLVC), 362–382 (ALFV…AFLA), and 408–428 (IIWP…GFSI). Phosphoserine occurs at positions 449 and 451.

Belongs to the fungal Na(+)/H(+) exchanger family.

The protein resides in the cell membrane. Sodium export from cell, takes up external protons in exchange for internal sodium ions. Involved in regulation of pH. This chain is Na(+)/H(+) antiporter, found in Schizosaccharomyces pombe (strain 972 / ATCC 24843) (Fission yeast).